The primary structure comprises 463 residues: RuvB-like 2 (463 aa).

Alanine 2 is modified (N-acetylalanine). A Glycyl lysine isopeptide (Lys-Gly) (interchain with G-Cter in SUMO2) cross-link involves residue lysine 9. Glycine 77 to threonine 84 is a binding site for ATP. Position 437 is a phosphoserine (serine 437). Residues lysine 444 and lysine 456 each participate in a glycyl lysine isopeptide (Lys-Gly) (interchain with G-Cter in SUMO2) cross-link.

Belongs to the RuvB family. In terms of assembly, forms homohexameric rings. Can form a dodecamer with RUVBL1 made of two stacked hexameric rings; however, even though RUVBL1 and RUVBL2 are present in equimolar ratio, the oligomeric status of each hexamer is not known. Oligomerization may regulate binding to nucleic acids and conversely, binding to nucleic acids may affect the dodecameric assembly. Interaction of the complex with DHX34 results in conformational changes of the N-terminus of the RUVBL2 subunits, resulting in loss of nucleotide binding ability and ATP hydrolysis of the complex. Interacts with the transcriptional activation domain of MYC. Interacts with ATF2. Component of the RNA polymerase II holoenzyme complex. May also act to bridge the LEF1/TCF1-CTNNB1 complex and TBP. Component of the NuA4 histone acetyltransferase complex which contains the catalytic subunit KAT5/TIP60 and the subunits EP400, TRRAP/PAF400, BRD8/SMAP, EPC1, DMAP1/DNMAP1, RUVBL1/TIP49, RUVBL2, ING3, actin, ACTL6A/BAF53A, MORF4L1/MRG15, MORF4L2/MRGX, MRGBP, YEATS4/GAS41, VPS72/YL1 and MEAF6. The NuA4 complex interacts with MYC and the adenovirus E1A protein. RUVBL2 interacts with EP400. Component of a NuA4-related complex which contains EP400, TRRAP/PAF400, SRCAP, BRD8/SMAP, EPC1, DMAP1/DNMAP1, RUVBL1/TIP49, RUVBL2, actin, ACTL6A/BAF53A, VPS72 and YEATS4/GAS41. Interacts with NPAT. Component of the chromatin-remodeling INO80 complex; specifically part of a complex module associated with the helicase ATP-binding and the helicase C-terminal domain of INO80. Component of some MLL1/MLL complex, at least composed of the core components KMT2A/MLL1, ASH2L, HCFC1/HCF1, WDR5 and RBBP5, as well as the facultative components BACC1, CHD8, E2F6, HSP70, INO80C, KANSL1, LAS1L, MAX, MCRS1, MGA, MYST1/MOF, PELP1, PHF20, PRP31, RING2, RUVB1/TIP49A, RUVB2/TIP49B, SENP3, TAF1, TAF4, TAF6, TAF7, TAF9 and TEX10. Interacts with IGHMBP2. Interacts with TELO2. Interacts with HINT1. Component of a SWR1-like complex. Component of the R2TP complex composed at least of RUVBL1, RUVBL2, RPAP3 and PIHD1. Component of the PAQosome complex which is responsible for the biogenesis of several protein complexes and which consists of R2TP complex members RUVBL1, RUVBL2, RPAP3 and PIH1D1, URI complex members PFDN2, PFDN6, PDRG1, UXT and URI1 as well as ASDURF, POLR2E and DNAAF10/WDR92. Interacts with ITFG1. Interacts with ZMYND10. Interacts with WAC; WAC positively regulates MTOR activity by promoting the assembly of the TTT complex composed of TELO2, TTI1 and TTI2 and the RUVBL complex composed of RUVBL1 and RUVBL2 into the TTT-RUVBL complex which leads to the dimerization of the mTORC1 complex and its subsequent activation. Forms a complex with APPL1 and APPL2. Interacts with ZNHIT2 (via HIT-type zinc finger) in the presence of ATP or ADP; shows a stronger interaction in the presence of ADP. The RUVBL1/RUVBL2 complex interacts with ZNHIT1 (via HIT-type zinc finger), ZNHIT3 (via HIT-type zinc finger), ZNHIT6 (via HIT-type zinc finger) and DDX59/ZNHIT5 (via HIT-type zinc finger) in the presence of ADP. Interacts with NOPCHAP1; the interaction is direct and disrupted upon ATP binding. Interacts with SMG1.

It localises to the nucleus matrix. Its subcellular location is the nucleus. The protein localises to the nucleoplasm. It is found in the cytoplasm. The protein resides in the membrane. It localises to the dynein axonemal particle. The catalysed reaction is ATP + H2O = ADP + phosphate + H(+). In terms of biological role, possesses single-stranded DNA-stimulated ATPase and ATP-dependent DNA helicase (5' to 3') activity; hexamerization is thought to be critical for ATP hydrolysis and adjacent subunits in the ring-like structure contribute to the ATPase activity. Component of the NuA4 histone acetyltransferase complex which is involved in transcriptional activation of select genes principally by acetylation of nucleosomal histones H4 and H2A. This modification may both alter nucleosome-DNA interactions and promote interaction of the modified histones with other proteins which positively regulate transcription. This complex may be required for the activation of transcriptional programs associated with oncogene and proto-oncogene mediated growth induction, tumor suppressor mediated growth arrest and replicative senescence, apoptosis, and DNA repair. The NuA4 complex ATPase and helicase activities seem to be, at least in part, contributed by the association of RUVBL1 and RUVBL2 with EP400. NuA4 may also play a direct role in DNA repair when recruited to sites of DNA damage. Component of a SWR1-like complex that specifically mediates the removal of histone H2A.Z/H2AZ1 from the nucleosome. Proposed core component of the chromatin remodeling INO80 complex which exhibits DNA- and nucleosome-activated ATPase activity and catalyzes ATP-dependent nucleosome sliding. Plays an essential role in oncogenic transformation by MYC and also modulates transcriptional activation by the LEF1/TCF1-CTNNB1 complex. May also inhibit the transcriptional activity of ATF2. Involved in the endoplasmic reticulum (ER)-associated degradation (ERAD) pathway where it negatively regulates expression of ER stress response genes. May play a role in regulating the composition of the U5 snRNP complex. In Bos taurus (Bovine), this protein is RuvB-like 2 (RUVBL2).